The following is a 542-amino-acid chain: CTP synthase (542 aa).

Positions 1–269 are amidoligase domain; it reads MQTKYIFITG…DALICELLHL (269 aa). Ser-14 lines the CTP pocket. Ser-14 lines the UTP pocket. Residues 15-20 and Asp-72 contribute to the ATP site; that span reads SLGKGL. Mg(2+) contacts are provided by Asp-72 and Glu-143. Residues 150 to 152, 189 to 194, and Lys-225 contribute to the CTP site; these read DIE and KTKPSQ. Residues 189-194 and Lys-225 each bind UTP; that span reads KTKPSQ. 241 to 243 is an ATP binding site; it reads KDV. Residues 301–538 form the Glutamine amidotransferase type-1 domain; it reads YVQHQDAYKS…IQAMIIYHKS (238 aa). L-glutamine is bound at residue Gly-358. Catalysis depends on Cys-385, which acts as the Nucleophile; for glutamine hydrolysis. Residues 386 to 389, Glu-409, and Arg-466 each bind L-glutamine; that span reads LGMQ. Catalysis depends on residues His-511 and Glu-513.

This sequence belongs to the CTP synthase family. Homotetramer.

The catalysed reaction is UTP + L-glutamine + ATP + H2O = CTP + L-glutamate + ADP + phosphate + 2 H(+). It carries out the reaction L-glutamine + H2O = L-glutamate + NH4(+). The enzyme catalyses UTP + NH4(+) + ATP = CTP + ADP + phosphate + 2 H(+). It participates in pyrimidine metabolism; CTP biosynthesis via de novo pathway; CTP from UDP: step 2/2. With respect to regulation, allosterically activated by GTP, when glutamine is the substrate; GTP has no effect on the reaction when ammonia is the substrate. The allosteric effector GTP functions by stabilizing the protein conformation that binds the tetrahedral intermediate(s) formed during glutamine hydrolysis. Inhibited by the product CTP, via allosteric rather than competitive inhibition. Catalyzes the ATP-dependent amination of UTP to CTP with either L-glutamine or ammonia as the source of nitrogen. Regulates intracellular CTP levels through interactions with the four ribonucleotide triphosphates. The polypeptide is CTP synthase (Protochlamydia amoebophila (strain UWE25)).